A 276-amino-acid polypeptide reads, in one-letter code: Sulfur carrier protein FdhD (276 aa).

Cysteine 122 serves as the catalytic Cysteine persulfide intermediate. Residue phenylalanine 259–lysine 264 coordinates Mo-bis(molybdopterin guanine dinucleotide).

Belongs to the FdhD family.

The protein resides in the cytoplasm. Functionally, required for formate dehydrogenase (FDH) activity. Acts as a sulfur carrier protein that transfers sulfur from IscS to the molybdenum cofactor prior to its insertion into FDH. The polypeptide is Sulfur carrier protein FdhD (Photorhabdus laumondii subsp. laumondii (strain DSM 15139 / CIP 105565 / TT01) (Photorhabdus luminescens subsp. laumondii)).